Reading from the N-terminus, the 122-residue chain is Small ribosomal subunit protein uS13 (122 aa).

The tract at residues 97 to 122 (PVRGQRTHTNARTRKGPAKAIAGKKK) is disordered.

The protein belongs to the universal ribosomal protein uS13 family. As to quaternary structure, part of the 30S ribosomal subunit. Forms a loose heterodimer with protein S19. Forms two bridges to the 50S subunit in the 70S ribosome.

In terms of biological role, located at the top of the head of the 30S subunit, it contacts several helices of the 16S rRNA. In the 70S ribosome it contacts the 23S rRNA (bridge B1a) and protein L5 of the 50S subunit (bridge B1b), connecting the 2 subunits; these bridges are implicated in subunit movement. Contacts the tRNAs in the A and P-sites. The sequence is that of Small ribosomal subunit protein uS13 from Bartonella quintana (strain Toulouse) (Rochalimaea quintana).